Here is a 466-residue protein sequence, read N- to C-terminus: Ras GTPase-activating protein-binding protein 1 (466 aa).

Positions 11 to 133 (VGREFVRQYY…FYVHNDIFRY (123 aa)) constitute an NTF2 domain. Glycyl lysine isopeptide (Lys-Gly) (interchain with G-Cter in ubiquitin) cross-links involve residues Lys-36, Lys-50, Lys-59, Lys-64, Lys-76, and Lys-123. The tract at residues 142–225 (VTEPQEESEE…EPVLEETAPE (84 aa)) is acidic disordered region. Residue Thr-143 is modified to Phosphothreonine. 2 disordered regions span residues 144-172 (EPQE…DSGT) and 184-243 (EEHL…QTVQ). Composition is skewed to acidic residues over residues 145–157 (PQEE…EEPE) and 185–206 (EHLE…EQEP). At Ser-149 the chain carries Phosphoserine. A phosphoserine mark is found at Ser-231, Ser-232, Ser-250, and Ser-253. The interval 255 to 329 (TSKNLPPSGA…REAGEQGDIE (75 aa)) is disordered. Basic and acidic residues-rich tracts occupy residues 297 to 307 (PQRDQRVREQR) and 318 to 329 (PIREAGEQGDIE). The 76-residue stretch at 340–415 (HQLFIGNLPH…VRLNVEEKKT (76 aa)) folds into the RRM domain. Residues Lys-353 and Lys-357 each participate in a glycyl lysine isopeptide (Lys-Gly) (interchain with G-Cter in ubiquitin) cross-link. At Ser-373 the chain carries Phosphoserine. A Glycyl lysine isopeptide (Lys-Gly) (interchain with G-Cter in ubiquitin) cross-link involves residue Lys-376. Position 376 is an N6-acetyllysine; alternate (Lys-376). A Glycyl lysine isopeptide (Lys-Gly) (interchain with G-Cter in SUMO2); alternate cross-link involves residue Lys-376. Residue Lys-393 forms a Glycyl lysine isopeptide (Lys-Gly) (interchain with G-Cter in ubiquitin); alternate linkage. The segment at 410–466 (VEEKKTRAAREGDRRDNRLRGPGGPRGGLGGGMRGPPRGGMVQKPGFGVGRGLAPRQ) is RG-rich region. A compositionally biased stretch (basic and acidic residues) spans 413–428 (KKTRAAREGDRRDNRL). The segment at 413–466 (KKTRAAREGDRRDNRLRGPGGPRGGLGGGMRGPPRGGMVQKPGFGVGRGLAPRQ) is disordered. The residue at position 429 (Arg-429) is an Asymmetric dimethylarginine. The span at 430 to 447 (GPGGPRGGLGGGMRGPPR) shows a compositional bias: gly residues. Arg-435 carries the post-translational modification Asymmetric dimethylarginine; alternate. At Arg-435 the chain carries Dimethylated arginine; alternate. An Omega-N-methylarginine; alternate modification is found at Arg-435. At Arg-447 the chain carries Omega-N-methylarginine. Arg-460 bears the Dimethylated arginine; alternate mark. An Omega-N-methylarginine; alternate modification is found at Arg-460. An Omega-N-methylarginine modification is found at Arg-465.

Homodimer and oligomer. Component of a TAU mRNP complex, at least composed of IGF2BP1, ELAVL4 and G3BP1. Binds to the SH3 domain of Ras GTPase-activating protein (RASA1) in proliferating cells. No interaction in quiescent cells. Interacts (via NTF2 domain) with USP10; inhibiting stress granule formation by lowering G3BP1 valence. Interacts (via NTF2 domain) with CAPRIN1; promoting stress granule formation by lowering the saturation-concentration of G3BP1. Interacts (via NTF2 domain) with UBAP2L; promoting stress granule formation. Associates (via RG-rich region) with 40S ribosome subunits. Interacts with RPTOR and SPAG5; this complex is increased by oxidative stress. Interacts with ATXN2L. Interacts with STYXL1. Interacts with CGAS (via N-terminus); this interaction promotes the DNA-binding and activation of CGAS. Interacts (via C-terminus) with RIGI. Interacts with PABPC1. Interacts with QKI (isoforms QKI6 and QKI7); directing N(7)-methylguanine-containing mRNAs to stress granules. As to quaternary structure, (Microbial infection) Interacts with Semliki forest virus non-structural protein 3 (via C-terminus); this interaction inhibits the formation of stress granules on viral mRNAs and the nsp3-G3BP1 complexes bind viral RNAs and probably orchestrate the assembly of viral replication complexes. In terms of assembly, (Microbial infection) Interacts with Chikungunya virus non-structural protein 3 (via C-terminus); this interaction inhibits the formation of stress granules on viral mRNAs and the nsp3-G3BP1 complexes bind viral RNAs and probably orchestrate the assembly of viral replication complexes. (Microbial infection) Interacts with Sindbis virus non-structural protein 3 (via C-terminus); this interaction inhibits the formation of stress granules on viral mRNAs and the nsp3-G3BP1 complexes bind viral RNAs and probably orchestrate the assembly of viral replication complexes. As to quaternary structure, (Microbial infection) Interacts with Zika virus capsid protein C; this interaction is probably linked to the inhibition of stress granules formation by the virus. In terms of assembly, (Microbial infection) Interacts with reovirus type 2 protein sigma-NS; this interaction induces the relocalization of G3BP1 to the outer periphery of sigma-NS/mu-Ns viral factories and is probably involved in the suppression of the integrated stress response by the virus. (Microbial infection) Interacts with SARS-CoV-2 N protein; the interaction is enhanced by host HDAC6 which deacetylates the viral N protein and promotes N protein association with G3BP1, disrupting stress granule formation and facilitating viral replication. Interacts with HDAC6; the interaction increases during SARS-CoV-2 infection. It depends on Mg(2+) as a cofactor. In terms of processing, phosphorylation of the acidic disordered region regulates stress granule assembly. RASA1-dependent phosphorylation of Ser-149 induces a conformational change that prevents self-association. Dephosphorylation after HRAS activation is required for stress granule assembly. Ser-149 phosphorylation induces partial nuclear localization. Ubiquitinated by TRIM21 via 'Lys-63'-linked polyubiquitination in the NTF2 domain in response to heat shock, leading to stress granule disassembly: ubiquitination promotes interaction with the FAF2 adapter, followed by interaction with VCP, which extracts G3BP1 from stress granules, leading to stress granule disassembly. In case of prolonged stress, ubiquitination by TRIM21 leads to autophagy-dependent degradation of G3BP1 via recruitment of ubiquitinated G3BP1 by SQSTM1 and/or CALCOCO2 to autophagosomes. Post-translationally, (Microbial infection) Cleaved by human enterovirus 71; this cleavage induces the disassembly of cytoplasmic stress granules. Cleaved by Foot-and-mouth disease virus; this cleavage suppresses the formation of cytoplasmic stress granules. In terms of processing, arg-435 is dimethylated, probably to asymmetric dimethylarginine. (Microbial infection) Cleaved by Encephalomyocarditis virus protease 3C; this cleavage suppresses the formation of cytoplasmic stress granules. In terms of tissue distribution, ubiquitous.

The protein resides in the cytoplasm. The protein localises to the cytosol. It is found in the perikaryon. It localises to the stress granule. Its subcellular location is the nucleus. It catalyses the reaction ATP + H2O = ADP + phosphate + H(+). Its activity is regulated as follows. Under physiological conditions, G3BP1 adopts a compact state that is stabilized by intramolecular interactions between the RG-rich and the acidic regions that inhibit phase separation. Upon stress, polysomes disassemble and mRNAs are released in an unfolded protein-free state. Binding of unfolded mRNA to G3BP1 outcompetes the intramolecular interactions and RNA-bound G3BP1 adopts an expanded conformation in which the RG-rich region becomes exposed to engage in protein-protein and protein-RNA interactions, allowing physical cross-linking of RNA molecules to form protein-RNA condensates, leading to liquid-liquid phase separation (LLPS). Functionally, protein involved in various processes, such as stress granule formation and innate immunity. Plays an essential role in stress granule formation. Stress granules are membraneless compartments that store mRNAs and proteins, such as stalled translation pre-initiation complexes, in response to stress. Promotes formation of stress granules phase-separated membraneless compartment by undergoing liquid-liquid phase separation (LLPS) upon unfolded RNA-binding: functions as a molecular switch that triggers RNA-dependent LLPS in response to a rise in intracellular free RNA concentrations. Also acts as an ATP- and magnesium-dependent helicase: unwinds DNA/DNA, RNA/DNA, and RNA/RNA substrates with comparable efficiency. Acts unidirectionally by moving in the 5' to 3' direction along the bound single-stranded DNA. Unwinds preferentially partial DNA and RNA duplexes having a 17 bp annealed portion and either a hanging 3' tail or hanging tails at both 5'- and 3'-ends. Plays an essential role in innate immunity by promoting CGAS and RIGI activity. Participates in the DNA-triggered cGAS/STING pathway by promoting the DNA binding and activation of CGAS. Triggers the condensation of cGAS, a process probably linked to the formation of membrane-less organelles. Also enhances RIGI-induced type I interferon production probably by helping RIGI at sensing pathogenic RNA. May also act as a phosphorylation-dependent sequence-specific endoribonuclease in vitro: Cleaves exclusively between cytosine and adenine and cleaves MYC mRNA preferentially at the 3'-UTR. The chain is Ras GTPase-activating protein-binding protein 1 from Homo sapiens (Human).